The primary structure comprises 113 residues: U11-theraphotoxin-Hhn1o (113 aa).

The first 21 residues, 1–21 (MNTVRVTFLLVFVLAVSLGQA), serve as a signal peptide directing secretion. A propeptide spanning residues 22 to 74 (DKDENRMEMQEKTEQGKSYLDFAENLLLQKLEELEAKLLEEDSEESRNSRQKR) is cleaved from the precursor. The disordered stretch occupies residues 61–83 (EEDSEESRNSRQKRCIGEGVPCD). 2 disulfide bridges follow: cysteine 75–cysteine 90 and cysteine 82–cysteine 95.

It belongs to the neurotoxin 14 (magi-1) family. 01 (HNTX-16) subfamily. In terms of tissue distribution, expressed by the venom gland.

It is found in the secreted. Probable ion channel inhibitor. The polypeptide is U11-theraphotoxin-Hhn1o (Cyriopagopus hainanus (Chinese bird spider)).